Reading from the N-terminus, the 191-residue chain is dCTP deaminase, dUMP-forming (191 aa).

Residues 101–106, D119, 127–129, Q148, Y162, and Q174 contribute to the dCTP site; these read KSSLGR and TLE. The active-site Proton donor/acceptor is E129. The disordered stretch occupies residues 163–191; sequence GSAKYGSRYQGQRGPTPSRSYQNFHRTPI. Over residues 171–191 the composition is skewed to polar residues; sequence YQGQRGPTPSRSYQNFHRTPI.

The protein belongs to the dCTP deaminase family. As to quaternary structure, homotrimer.

The catalysed reaction is dCTP + 2 H2O = dUMP + NH4(+) + diphosphate. It functions in the pathway pyrimidine metabolism; dUMP biosynthesis; dUMP from dCTP: step 1/1. Functionally, bifunctional enzyme that catalyzes both the deamination of dCTP to dUTP and the hydrolysis of dUTP to dUMP without releasing the toxic dUTP intermediate. In Nocardioides sp. (strain ATCC BAA-499 / JS614), this protein is dCTP deaminase, dUMP-forming.